The following is a 234-amino-acid chain: Large ribosomal subunit protein uL1 (234 aa).

Belongs to the universal ribosomal protein uL1 family. As to quaternary structure, part of the 50S ribosomal subunit.

Binds directly to 23S rRNA. The L1 stalk is quite mobile in the ribosome, and is involved in E site tRNA release. Its function is as follows. Protein L1 is also a translational repressor protein, it controls the translation of the L11 operon by binding to its mRNA. The protein is Large ribosomal subunit protein uL1 of Prochlorococcus marinus (strain SARG / CCMP1375 / SS120).